The primary structure comprises 188 residues: Holliday junction branch migration complex subunit RuvA (188 aa).

The domain I stretch occupies residues 1 to 63 (MIEIIEGIYK…QEDMTIYGFD (63 aa)). Residues 64-142 (SKVKKETFEK…VVEVNEEMLE (79 aa)) form a domain II region. Residue glutamate 142 is a region of interest, flexible linker. The interval 142–188 (EAIEALVSLGYSKTQARNAVSKVLKESPNISNVSKIIKEALKILAKI) is domain III.

This sequence belongs to the RuvA family. Homotetramer. Forms an RuvA(8)-RuvB(12)-Holliday junction (HJ) complex. HJ DNA is sandwiched between 2 RuvA tetramers; dsDNA enters through RuvA and exits via RuvB. An RuvB hexamer assembles on each DNA strand where it exits the tetramer. Each RuvB hexamer is contacted by two RuvA subunits (via domain III) on 2 adjacent RuvB subunits; this complex drives branch migration. In the full resolvosome a probable DNA-RuvA(4)-RuvB(12)-RuvC(2) complex forms which resolves the HJ.

Its subcellular location is the cytoplasm. Functionally, the RuvA-RuvB-RuvC complex processes Holliday junction (HJ) DNA during genetic recombination and DNA repair, while the RuvA-RuvB complex plays an important role in the rescue of blocked DNA replication forks via replication fork reversal (RFR). RuvA specifically binds to HJ cruciform DNA, conferring on it an open structure. The RuvB hexamer acts as an ATP-dependent pump, pulling dsDNA into and through the RuvAB complex. HJ branch migration allows RuvC to scan DNA until it finds its consensus sequence, where it cleaves and resolves the cruciform DNA. This chain is Holliday junction branch migration complex subunit RuvA, found in Fervidobacterium nodosum (strain ATCC 35602 / DSM 5306 / Rt17-B1).